The primary structure comprises 376 residues: tRNA-specific 2-thiouridylase MnmA (376 aa).

Residues 17–24 (GMSGGVDS) and methionine 43 each bind ATP. Positions 103–105 (NPD) are interaction with target base in tRNA. Catalysis depends on cysteine 108, which acts as the Nucleophile. The cysteines at positions 108 and 204 are disulfide-linked. Glycine 132 contacts ATP. Positions 154 to 156 (KDQ) are interaction with tRNA. The active-site Cysteine persulfide intermediate is the cysteine 204. An interaction with tRNA region spans residues 316-317 (RY).

Belongs to the MnmA/TRMU family.

Its subcellular location is the cytoplasm. It carries out the reaction S-sulfanyl-L-cysteinyl-[protein] + uridine(34) in tRNA + AH2 + ATP = 2-thiouridine(34) in tRNA + L-cysteinyl-[protein] + A + AMP + diphosphate + H(+). In terms of biological role, catalyzes the 2-thiolation of uridine at the wobble position (U34) of tRNA, leading to the formation of s(2)U34. This chain is tRNA-specific 2-thiouridylase MnmA, found in Pseudomonas savastanoi pv. phaseolicola (strain 1448A / Race 6) (Pseudomonas syringae pv. phaseolicola (strain 1448A / Race 6)).